Here is a 143-residue protein sequence, read N- to C-terminus: Nucleoside diphosphate kinase (143 aa).

ATP contacts are provided by lysine 11, phenylalanine 59, arginine 87, threonine 93, arginine 104, and asparagine 114. Catalysis depends on histidine 117, which acts as the Pros-phosphohistidine intermediate.

This sequence belongs to the NDK family. Homotetramer. Mg(2+) serves as cofactor.

The protein resides in the cytoplasm. The catalysed reaction is a 2'-deoxyribonucleoside 5'-diphosphate + ATP = a 2'-deoxyribonucleoside 5'-triphosphate + ADP. It catalyses the reaction a ribonucleoside 5'-diphosphate + ATP = a ribonucleoside 5'-triphosphate + ADP. Major role in the synthesis of nucleoside triphosphates other than ATP. The ATP gamma phosphate is transferred to the NDP beta phosphate via a ping-pong mechanism, using a phosphorylated active-site intermediate. This chain is Nucleoside diphosphate kinase, found in Shewanella oneidensis (strain ATCC 700550 / JCM 31522 / CIP 106686 / LMG 19005 / NCIMB 14063 / MR-1).